Reading from the N-terminus, the 312-residue chain is Putative S-adenosyl-L-methionine-dependent methyltransferase Mjls_0078 (312 aa).

Residues aspartate 134 and 163-164 each bind S-adenosyl-L-methionine; that span reads DL.

Belongs to the UPF0677 family.

Exhibits S-adenosyl-L-methionine-dependent methyltransferase activity. This is Putative S-adenosyl-L-methionine-dependent methyltransferase Mjls_0078 from Mycobacterium sp. (strain JLS).